We begin with the raw amino-acid sequence, 180 residues long: Bifunctional protein PyrR (180 aa).

The PRPP-binding signature appears at 101–113; sequence LIVVDDVLFTGRT.

The protein belongs to the purine/pyrimidine phosphoribosyltransferase family. PyrR subfamily. As to quaternary structure, homodimer and homohexamer; in equilibrium.

It catalyses the reaction UMP + diphosphate = 5-phospho-alpha-D-ribose 1-diphosphate + uracil. In terms of biological role, regulates transcriptional attenuation of the pyrimidine nucleotide (pyr) operon by binding in a uridine-dependent manner to specific sites on pyr mRNA. This disrupts an antiterminator hairpin in the RNA and favors formation of a downstream transcription terminator, leading to a reduced expression of downstream genes. Its function is as follows. Also displays a weak uracil phosphoribosyltransferase activity which is not physiologically significant. This chain is Bifunctional protein PyrR, found in Bacillus pumilus (strain SAFR-032).